We begin with the raw amino-acid sequence, 372 residues long: Queuine tRNA-ribosyltransferase (372 aa).

Asp-93 serves as the catalytic Proton acceptor. Residues 93-97 (DSGGF), Asp-147, Gln-190, and Gly-217 contribute to the substrate site. An RNA binding region spans residues 248–254 (GVGSPDC). Residue Asp-267 is the Nucleophile of the active site. Residues 272–276 (TRMAR) are RNA binding; important for wobble base 34 recognition. 4 residues coordinate Zn(2+): Cys-305, Cys-307, Cys-310, and His-336.

This sequence belongs to the queuine tRNA-ribosyltransferase family. In terms of assembly, homodimer. Within each dimer, one monomer is responsible for RNA recognition and catalysis, while the other monomer binds to the replacement base PreQ1. Zn(2+) is required as a cofactor.

It carries out the reaction 7-aminomethyl-7-carbaguanine + guanosine(34) in tRNA = 7-aminomethyl-7-carbaguanosine(34) in tRNA + guanine. It functions in the pathway tRNA modification; tRNA-queuosine biosynthesis. Catalyzes the base-exchange of a guanine (G) residue with the queuine precursor 7-aminomethyl-7-deazaguanine (PreQ1) at position 34 (anticodon wobble position) in tRNAs with GU(N) anticodons (tRNA-Asp, -Asn, -His and -Tyr). Catalysis occurs through a double-displacement mechanism. The nucleophile active site attacks the C1' of nucleotide 34 to detach the guanine base from the RNA, forming a covalent enzyme-RNA intermediate. The proton acceptor active site deprotonates the incoming PreQ1, allowing a nucleophilic attack on the C1' of the ribose to form the product. After dissociation, two additional enzymatic reactions on the tRNA convert PreQ1 to queuine (Q), resulting in the hypermodified nucleoside queuosine (7-(((4,5-cis-dihydroxy-2-cyclopenten-1-yl)amino)methyl)-7-deazaguanosine). This Desulforudis audaxviator (strain MP104C) protein is Queuine tRNA-ribosyltransferase.